The sequence spans 506 residues: MADATEDILRRFDCKASSPIKVPNNLSQSYQMADDSSIDLRDYMDRQKSSRNYSDSEYTPSPIKREKPETKQSAHLSTTTRLPPISPKKLFASPTKNYSQHVMQERSAPNSPQKKSLPNENDDLKNLRLEMKRLKQEYNVKIENLNYKLNLITKERDEIMKENIELTSDKSRLKTQNDLLSVDNDNLLKRKFESEKQLKNSEMKILSLEDKVEKLVSLNKSVTVKNMTMKQSLEGIQVKLKKYYDLYKECQEKHNNPQDSPPKVKIATPDPEVETQNKALQPQLQIQELVQALKNLTIAIESKNDIPSSELHYLVKILKELIAKDIFRPSSPNHQTQPVFQSTPQSKVESVNLENVPPESQPSHVSSNSQQNLSDKSRTSIPSRDNPSPNVLRAEEPQDFHNANPIQSQPKEWTREREERDGSTGYSIRSDMAEIKEFLKFLVDGVKNDQKDTNSPEESNTDGKEEEEKVHIEDKSCHCKPVSNHAAFCPVCLNREDFTVSHFLSQ.

4 disordered regions span residues 18 to 121 (SPIK…PNEN), 252 to 276 (EKHN…VETQ), 329 to 429 (PSSP…YSIR), and 447 to 470 (KNDQ…EEKV). The span at 38 to 48 (IDLRDYMDRQK) shows a compositional bias: basic and acidic residues. Polar residues predominate over residues 50 to 59 (SRNYSDSEYT). Residues 63–72 (IKREKPETKQ) are compositionally biased toward basic and acidic residues. Residues 94–119 (PTKNYSQHVMQERSAPNSPQKKSLPN) show a composition bias toward polar residues. Polar residues-rich tracts occupy residues 330–353 (SSPN…SVNL) and 361–389 (QPSH…NPSP). Composition is skewed to basic and acidic residues over residues 412-422 (EWTREREERDG) and 461-470 (TDGKEEEEKV).

The protein localises to the cytoplasm. Its subcellular location is the cytoskeleton. It is found in the microtubule organizing center. The protein resides in the spindle pole body. In terms of biological role, plays a role in mitotic spindle pole body organization, possibly at the point of spindle pole body separation. Required for mitotic exit. The chain is Spindle pole body protein CSA6 from Candida tropicalis (strain ATCC MYA-3404 / T1) (Yeast).